Here is an 83-residue protein sequence, read N- to C-terminus: MVTIRLARGGAKKRPFYNIVVTDSRNARDGRFIERVGFFNPLAKGQEETLRLDLDRVDHWVGNGASTTDRVAKLIKDARKAAA.

It belongs to the bacterial ribosomal protein bS16 family.

In Shewanella amazonensis (strain ATCC BAA-1098 / SB2B), this protein is Small ribosomal subunit protein bS16.